A 177-amino-acid chain; its full sequence is Large ribosomal subunit protein uL6 (177 aa).

The protein belongs to the universal ribosomal protein uL6 family. As to quaternary structure, part of the 50S ribosomal subunit.

This protein binds to the 23S rRNA, and is important in its secondary structure. It is located near the subunit interface in the base of the L7/L12 stalk, and near the tRNA binding site of the peptidyltransferase center. This chain is Large ribosomal subunit protein uL6, found in Bradyrhizobium diazoefficiens (strain JCM 10833 / BCRC 13528 / IAM 13628 / NBRC 14792 / USDA 110).